The primary structure comprises 218 residues: Ras-related protein Rab-27B (218 aa).

N-acetylthreonine is present on T2. 16 to 24 (GDSGVGKTT) is a GTP binding site. The Effector region motif lies at 38-46 (FITTVGIDF). GTP is bound by residues 74 to 78 (DTAGQ), 133 to 136 (NKAD), and 163 to 165 (SAA). A disulfide bridge links C123 with C188. The interval 194-218 (IPDTVNGGNSGNLDGEKPPEKKCIC) is disordered. Positions 207–218 (DGEKPPEKKCIC) are enriched in basic and acidic residues. S-geranylgeranyl cysteine attachment occurs at residues C216 and C218. A Cysteine methyl ester modification is found at C218.

This sequence belongs to the small GTPase superfamily. Rab family. As to quaternary structure, interacts with SYTL2, SYTL4, MYRIP and MLPH. Interacts with RPH3A and RPH3A. Interacts (GDP-bound form preferentially) with DENND10. Expressed primarily in testis.

The protein resides in the membrane. The protein localises to the late endosome. It catalyses the reaction GTP + H2O = GDP + phosphate + H(+). With respect to regulation, regulated by guanine nucleotide exchange factors (GEFs) which promote the exchange of bound GDP for free GTP, GTPase activating proteins (GAPs) which increase the GTP hydrolysis activity, and GDP dissociation inhibitors which inhibit the dissociation of the nucleotide from the GTPase. Activated by GEFs such as DENND10. Small GTPase which cycles between active GTP-bound and inactive GDP-bound states. In its active state, binds to a variety of effector proteins to regulate homeostasis of late endocytic pathway, including endosomal positioning, maturation and secretion. Plays a role in NTRK2/TRKB axonal anterograde transport by facilitating the association of NTRK2/TRKB with KLC1. May be involved in targeting uroplakins to urothelial apical membranes. The protein is Ras-related protein Rab-27B (RAB27B) of Homo sapiens (Human).